The following is a 203-amino-acid chain: V-type ATP synthase subunit D (203 aa).

This sequence belongs to the V-ATPase D subunit family.

Produces ATP from ADP in the presence of a proton gradient across the membrane. This is V-type ATP synthase subunit D from Streptococcus pneumoniae serotype 19F (strain G54).